The sequence spans 1703 residues: MIGRLYMKKLKNLFLFLSSLCPVFPWISQISLVMPFGLYYGFLTALPIGPSQILSIRTFFLEGNRSGIICILGSMMGQFVILLSIYCSPLYVMLVKPHLMTLLVIPYMFYYWYRTKNPSRYYILHPIKSLTHAHTRNLLLDSFIFQLLNPILLPNPVLTRLLNLFLFRYSSNVFFLTSSLLGWLCGHILFINSIKLLLFRIEHDSPIIYILMKRSISRTFSILISITFFLYLGRSPVPLITKKFADEITLSDQKIKENLWEESLWLYRPWPTSFFDQYRWNRPIRYIPNSKSSHNGFVKKQVSKFFYDECITDGKNAISFASQPSLSIFKKQLMNYLHNSDISISTKDSYKGWIETKREKRDALNNEFKDRIQFVYNSSTIEEAMENKTGFSHDRNHFLVKVNDPFLSGSSRIRIPNKKYSSSLLKLHDSKDQTMKISKKTKRKHTRNKMRNWIFNKHKKWQHNKFPLPWEPIPTKAEKVFWRILNESENPIILEMLTTLNSIKEKNYQFRITWEHIFQLPRIEKAIFLFRSKQEIEDSIFRYPSHLSLKNLTLFNIFTRSKNIFYSAKIAVSPILQIEEMQKELPRYNSRLRSDRIDAVNVDVDIRQRKIKNLGPRKGKLEDKEKEKEKAAQTQTEVKKEREKEKEERVIKRFQNQSDFRRKLVKGSIRARRRKTGIWRLYQSGTHSPFFLRMKEIPISFQSSINALRLNKMKDERAILGIGKELRPFNLYKKRSKADRLTIAARFDFPIAHAGRGVLLIIQSNIRKYVILPILIICKNIGRIMLFQSPEWKEDWAEWNQEIHIKCTYDGIEVSHRHLPAHWFKEGLQIKILYPFHLKPWHIHRTNNINDLRNEAQIQKEISDFGKQRKLSFSYLTIWGYQTSSVFGSMKKRPSFWRPIANALKKKLQRNLFSKLTWISHFFYEIILLSRTFIISKKPNNIPEMSIQSNELRYDVSDYELIQKYPNSNEKNDYVVMNEISIESNNRNGKEISHESQDQYKDNFNNIRSFNDIETLLTDISGTSVEESYRDRIETYLRLNKKNHRYAINIRLIWNKQLVQTQQEFSRFRRIIMQFMHKGYRLAKRFLTKFYREIFRRFTFSIQLSIQLVLRLTKNITKLSEKNKVYQNLNLLKKNEQNLKIDSSRNKPVLSQAYVFQKLWHARTRTKIDVHYLVQSLEREIVNSIENNELKASKLKDLKWNEHNYLNDHIKDLLEIQGLLKETQTFTEKNWKEWLHCFTRYQISSKIEYGIVPQKWKNEVKKRWKSNTNKLDKNKEYKTLEKENKYSLYETNNMLKQRINNRNNYCEFYNLLYSFIDSTKASNIIKLPIQQKGKEDPIQYINDINKIHENIHLNSKKKYKRPQFQSISTEKGDIDSNLMLWLLPNLLDTKPESVTNSLDSYSFEMYLSQNEDKDSLKKEIRFNAKKLNLDTKEPTSDAMKPTSDTKELISDTNEPTSDIKSDDQSENQNKPLKEKSIRERKHHRPIPQVKWKSKSVEKKMQRINNLTSFLSVIEDRKNMENYIISFCMKMGIDIDLLNSFFTNTEDELSIQLLDDSAHRLPRLLNDQTLVRKMVSILLNFEKQFEEGITSKISSQSISSIYRTEKKYSVNSYNLEDIMLSRRYRELRILNSLILEKQYVNFDHWIDKSEKYPFLNLPSQVQIIKRFLWPTYRLEDLACMNRFWFNTNNGSRFAMLKLRMYCPD.

The next 6 helical transmembrane spans lie at 39-61 (YYGF…TFFL), 67-87 (GIIC…SIYC), 90-110 (LYVM…YMFY), 138-158 (LLLD…NPVL), 174-194 (FFLT…INSI), and 220-240 (FSIL…VPLI). 2 disordered regions span residues 615–643 (GPRK…KERE) and 1431–1494 (TKEP…WKSK). Residues 618 to 660 (KGKLEDKEKEKEKAAQTQTEVKKEREKEKEERVIKRFQNQSDF) adopt a coiled-coil conformation. A compositionally biased stretch (basic and acidic residues) spans 619–643 (GKLEDKEKEKEKAAQTQTEVKKERE).

This sequence belongs to the TIC214 family. Part of the Tic complex.

It is found in the plastid. It localises to the chloroplast inner membrane. Functionally, involved in protein precursor import into chloroplasts. May be part of an intermediate translocation complex acting as a protein-conducting channel at the inner envelope. This Psilotum nudum (Whisk fern) protein is Protein TIC 214.